Reading from the N-terminus, the 230-residue chain is Endonuclease NucS (230 aa).

The protein belongs to the NucS endonuclease family.

Its subcellular location is the cytoplasm. Its function is as follows. Cleaves both 3' and 5' ssDNA extremities of branched DNA structures. The polypeptide is Endonuclease NucS (Corynebacterium aurimucosum (strain ATCC 700975 / DSM 44827 / CIP 107346 / CN-1) (Corynebacterium nigricans)).